Consider the following 176-residue polypeptide: Transcription termination/antitermination protein NusG (176 aa).

A KOW domain is found at 125–149 (GEVVRVVEGPFANFTATVEEYDVEH).

This sequence belongs to the NusG family.

Participates in transcription elongation, termination and antitermination. In Helicobacter pylori (strain ATCC 700392 / 26695) (Campylobacter pylori), this protein is Transcription termination/antitermination protein NusG.